The primary structure comprises 524 residues: 2-isopropylmalate synthase (524 aa).

The Pyruvate carboxyltransferase domain occupies 15–275 (VVVFDTTMRD…PYGTSVDPVH (261 aa)). Residues Asp-24, His-212, His-214, and Asn-248 each coordinate Mn(2+). A regulatory domain region spans residues 401–524 (RVSRLRVVAG…RPEAAIASGF (124 aa)).

The protein belongs to the alpha-IPM synthase/homocitrate synthase family. LeuA type 1 subfamily. Homodimer. It depends on Mn(2+) as a cofactor.

Its subcellular location is the cytoplasm. It catalyses the reaction 3-methyl-2-oxobutanoate + acetyl-CoA + H2O = (2S)-2-isopropylmalate + CoA + H(+). It participates in amino-acid biosynthesis; L-leucine biosynthesis; L-leucine from 3-methyl-2-oxobutanoate: step 1/4. Functionally, catalyzes the condensation of the acetyl group of acetyl-CoA with 3-methyl-2-oxobutanoate (2-ketoisovalerate) to form 3-carboxy-3-hydroxy-4-methylpentanoate (2-isopropylmalate). The chain is 2-isopropylmalate synthase from Caulobacter vibrioides (strain ATCC 19089 / CIP 103742 / CB 15) (Caulobacter crescentus).